The chain runs to 110 residues: NADH-quinone oxidoreductase subunit K (110 aa).

3 consecutive transmembrane segments (helical) span residues 13–33 (LNHYLILSSLVFTIGMFGLFM), 41–61 (ILMSIELMLLAVNINFVAFSI), and 73–93 (IIILTVAAAETSIGLAILLIY).

Belongs to the complex I subunit 4L family. As to quaternary structure, NDH-1 is composed of 14 different subunits. Subunits NuoA, H, J, K, L, M, N constitute the membrane sector of the complex.

It localises to the cell inner membrane. The catalysed reaction is a quinone + NADH + 5 H(+)(in) = a quinol + NAD(+) + 4 H(+)(out). In terms of biological role, NDH-1 shuttles electrons from NADH, via FMN and iron-sulfur (Fe-S) centers, to quinones in the respiratory chain. The immediate electron acceptor for the enzyme in this species is believed to be ubiquinone. Couples the redox reaction to proton translocation (for every two electrons transferred, four hydrogen ions are translocated across the cytoplasmic membrane), and thus conserves the redox energy in a proton gradient. The chain is NADH-quinone oxidoreductase subunit K from Rickettsia conorii (strain ATCC VR-613 / Malish 7).